A 658-amino-acid chain; its full sequence is Carnitine O-palmitoyltransferase 2, mitochondrial (658 aa).

The N-terminal 25 residues, 1 to 25 (MVPRLLLRAWPRGPAVGPGAPSRPL), are a transit peptide targeting the mitochondrion. Residues 26–178 (SAGSGPGQYL…GLLEPEVFHL (153 aa)) are Mitochondrial matrix-facing. Residue K69 is modified to N6-succinyllysine. Residue K79 is modified to N6-acetyllysine. The residue at position 85 (K85) is an N6-succinyllysine. Positions 179 to 208 (NPAKSDTDTFKRLIRFVPSSLSWYGAYLVN) form an intramembrane region, note=Mitochondrial inner membrane. Topologically, residues 209 to 658 (AYPLDMSQYF…DALEGKSIKS (450 aa)) are mitochondrial matrix. Position 239 is an N6-acetyllysine; alternate (K239). At K239 the chain carries N6-succinyllysine; alternate. Position 305 is an N6-acetyllysine (K305). H372 serves as the catalytic Proton acceptor. Position 418 is an N6-acetyllysine; alternate (K418). An N6-succinyllysine; alternate modification is found at K418. 2 positions are modified to N6-succinyllysine: K424 and K439. Residue 452 to 464 (GKEFLKKQKLSPD) coordinates CoA. Y486, S488, and T499 together coordinate (R)-carnitine. An N6-acetyllysine; alternate mark is found at K510 and K544. K510 and K544 each carry N6-succinyllysine; alternate.

It belongs to the carnitine/choline acetyltransferase family.

Its subcellular location is the mitochondrion inner membrane. It carries out the reaction (R)-carnitine + hexadecanoyl-CoA = O-hexadecanoyl-(R)-carnitine + CoA. The catalysed reaction is octanoyl-CoA + (R)-carnitine = O-octanoyl-(R)-carnitine + CoA. It catalyses the reaction decanoyl-CoA + (R)-carnitine = O-decanoyl-(R)-carnitine + CoA. The enzyme catalyses dodecanoyl-CoA + (R)-carnitine = O-dodecanoyl-R-carnitine + CoA. It carries out the reaction tetradecanoyl-CoA + (R)-carnitine = O-tetradecanoyl-(R)-carnitine + CoA. The catalysed reaction is (R)-carnitine + octadecanoyl-CoA = O-octadecanoyl-(R)-carnitine + CoA. It catalyses the reaction eicosanoyl-CoA + (R)-carnitine = O-eicosanoyl-(R)-carnitine + CoA. The enzyme catalyses (9Z)-tetradecenoyl-CoA + (R)-carnitine = O-(9Z)-tetradecenoyl-(R)-carnitine + CoA. It carries out the reaction (5Z)-tetradecenoyl-CoA + (R)-carnitine = O-(5Z)-tetradecenoyl-(R)-carnitine + CoA. The catalysed reaction is (R)-carnitine + (9Z)-octadecenoyl-CoA = O-(9Z)-octadecenoyl-(R)-carnitine + CoA. It catalyses the reaction 4,8-dimethylnonanoyl-CoA + (R)-carnitine = O-4,8-dimethylnonanoyl-(R)-carnitine + CoA. Its pathway is lipid metabolism; fatty acid beta-oxidation. In terms of biological role, involved in the intramitochondrial synthesis of acylcarnitines from accumulated acyl-CoA metabolites. Reconverts acylcarnitines back into the respective acyl-CoA esters that can then undergo beta-oxidation, an essential step for the mitochondrial uptake of long-chain fatty acids and their subsequent beta-oxidation in the mitochondrion. Active with medium (C8-C12) and long-chain (C14-C18) acyl-CoA esters. The sequence is that of Carnitine O-palmitoyltransferase 2, mitochondrial (CPT2) from Macaca fascicularis (Crab-eating macaque).